Consider the following 78-residue polypeptide: Toxin-like protein 10 (78 aa).

The N-terminal stretch at 1 to 23 (MKATALLIAVFILFSVFGDMGYC) is a signal peptide.

In terms of processing, contains 4 disulfide bonds. As to expression, expressed by the venom gland.

The protein resides in the secreted. This is Toxin-like protein 10 from Urodacus yaschenkoi (Inland robust scorpion).